Here is a 271-residue protein sequence, read N- to C-terminus: Bifunctional protein FolD (271 aa).

Residues glycine 154–serine 156, serine 181, and isoleucine 222 contribute to the NADP(+) site.

Belongs to the tetrahydrofolate dehydrogenase/cyclohydrolase family. Homodimer.

The enzyme catalyses (6R)-5,10-methylene-5,6,7,8-tetrahydrofolate + NADP(+) = (6R)-5,10-methenyltetrahydrofolate + NADPH. It catalyses the reaction (6R)-5,10-methenyltetrahydrofolate + H2O = (6R)-10-formyltetrahydrofolate + H(+). It participates in one-carbon metabolism; tetrahydrofolate interconversion. Catalyzes the oxidation of 5,10-methylenetetrahydrofolate to 5,10-methenyltetrahydrofolate and then the hydrolysis of 5,10-methenyltetrahydrofolate to 10-formyltetrahydrofolate. This is Bifunctional protein FolD from Thermotoga sp. (strain RQ2).